The sequence spans 208 residues: Large ribosomal subunit protein uL3 (208 aa).

Gln-149 is modified (N5-methylglutamine).

Belongs to the universal ribosomal protein uL3 family. Part of the 50S ribosomal subunit. Forms a cluster with proteins L14 and L19. Post-translationally, methylated by PrmB.

One of the primary rRNA binding proteins, it binds directly near the 3'-end of the 23S rRNA, where it nucleates assembly of the 50S subunit. This chain is Large ribosomal subunit protein uL3, found in Glaesserella parasuis serovar 5 (strain SH0165) (Haemophilus parasuis).